We begin with the raw amino-acid sequence, 92 residues long: Small ribosomal subunit protein uS19c (92 aa).

This sequence belongs to the universal ribosomal protein uS19 family.

It is found in the plastid. The protein localises to the chloroplast. Functionally, protein S19 forms a complex with S13 that binds strongly to the 16S ribosomal RNA. This chain is Small ribosomal subunit protein uS19c, found in Lactuca sativa (Garden lettuce).